A 250-amino-acid chain; its full sequence is Probable aquaporin TIP-type (250 aa).

Transmembrane regions (helical) follow at residues 20–42 (AYVA…AIAY) and 55–77 (GLVA…AANV). The NPA 1 signature appears at 83–85 (NPA). The next 3 membrane-spanning stretches (helical) occupy residues 97–119 (TILT…CLLL), 140–162 (IQGV…ATAA), and 172–194 (IAPI…FSGG). The NPA 2 signature appears at 197–199 (NPA). The helical transmembrane segment at 215 to 237 (WIYWAGPLIGGALAGFIYGDVFI) threads the bilayer.

This sequence belongs to the MIP/aquaporin (TC 1.A.8) family. TIP (TC 1.A.8.10) subfamily. In terms of tissue distribution, expressed in mature seeds and dark-grown seedlings.

The protein localises to the vacuole membrane. Channel protein in tonoplast. These proteins may allow the diffusion of amino acids and/or peptides from the vacuolar compartment to the cytoplasm. This chain is Probable aquaporin TIP-type (DIP), found in Antirrhinum majus (Garden snapdragon).